The sequence spans 417 residues: Phosphoglycerate kinase 1 (417 aa).

Position 2 is an N-acetylserine (S2). A phosphoserine mark is found at S2 and S4. Position 6 is an N6-succinyllysine (K6). K11 bears the N6-acetyllysine mark. Positions 23, 24, 25, 26, 38, and 39 each coordinate (2R)-3-phosphoglycerate. The segment at 38 to 43 (QRIKAA) is mitochondrial targeting region exposed following cis-trans isomerization by PIN1 and recognized by the TOM complex for mitochondrial translocation of the protein. K48 bears the N6-acetyllysine; alternate mark. K48 is modified (N6-succinyllysine; alternate). Positions 62, 63, 65, and 66 each coordinate (2R)-3-phosphoglycerate. N6-acetyllysine is present on K75. Y76 is modified (phosphotyrosine). An N6-acetyllysine mark is found at K86 and K91. K97 bears the N6-acetyllysine; alternate mark. K97 is subject to N6-(2-hydroxyisobutyryl)lysine; alternate. (2R)-3-phosphoglycerate contacts are provided by L122 and R123. At K131 the chain carries N6-acetyllysine; alternate. K131 carries the post-translational modification N6-malonyllysine; alternate. K146 is modified (N6-acetyllysine). (2R)-3-phosphoglycerate is bound by residues H170 and R171. K191 bears the N6-succinyllysine mark. Phosphotyrosine is present on Y196. K199 carries the post-translational modification N6-acetyllysine. S203 bears the Phosphoserine mark. G214 is a binding site for ADP. Position 214 (G214) interacts with CDP. Residues A215 and K216 each contribute to the AMP site. A215 is a binding site for ATP. A215 is a binding site for Mg(2+). K216 carries the post-translational modification N6-(2-hydroxyisobutyryl)lysine. Mg(2+)-binding residues include A218 and D219. Residue D219 coordinates CDP. Residue K220 participates in AMP binding. K220 is a binding site for ATP. The residue at position 220 (K220) is an N6-(2-hydroxyisobutyryl)lysine. G238 contributes to the ADP binding site. G238 contacts CDP. AMP is bound at residue G239. G239 lines the ATP pocket. N6-acetyllysine is present on residues K267 and K291. AMP is bound at residue G313. Residue G313 participates in ATP binding. Position 323 is an N6-(2-hydroxyisobutyryl)lysine (K323). CDP-binding residues include G338, V340, and F343. F343 provides a ligand contact to ADP. Position 344 (E344) interacts with AMP. E344 provides a ligand contact to ATP. K361 is subject to N6-acetyllysine. Positions 375 and 376 each coordinate ATP. D375 contributes to the Mg(2+) binding site.

This sequence belongs to the phosphoglycerate kinase family. Monomer. Interacts with kinase MAPK1/ERK2; the interaction is direct, occurs under hypoxic conditions, and promotes its interaction with PIN1. Interacts with peptidyl-prolyl cis-trans isomerase PIN1; the interaction is direct, occurs under hypoxic conditions, and targets the protein to the mitochondrion by promoting interactions with the TOM complex. Interacts with mitochondrial circRNA mcPGK1 (via its 2nd stem-loop); the interaction is direct and targets the protein to the mitochondrion by promoting interactions with the TOM complex. Interacts with pyruvate dehydrogenase kinase PDK1; the interaction is direct, occurs under hypoxic conditions and leads to PDK1-mediated inhibition of pyruvate dehydrogenase complex activity. It depends on Mg(2+) as a cofactor. In terms of processing, phosphorylated at Ser-203 by MAPK1/ERK2 under hypoxic conditions, which promotes its mitochondrial targeting.

Its subcellular location is the cytoplasm. It is found in the cytosol. The protein localises to the mitochondrion matrix. The enzyme catalyses (2R)-3-phosphoglycerate + ATP = (2R)-3-phospho-glyceroyl phosphate + ADP. The catalysed reaction is L-seryl-[protein] + ATP = O-phospho-L-seryl-[protein] + ADP + H(+). Its pathway is carbohydrate degradation; glycolysis; pyruvate from D-glyceraldehyde 3-phosphate: step 2/5. Functionally, catalyzes one of the two ATP producing reactions in the glycolytic pathway via the reversible conversion of 1,3-diphosphoglycerate to 3-phosphoglycerate. Both L- and D- forms of purine and pyrimidine nucleotides can be used as substrates, but the activity is much lower on pyrimidines. In addition to its role as a glycolytic enzyme, it seems that PGK-1 acts as a polymerase alpha cofactor protein (primer recognition protein). Acts as a protein kinase when localized to the mitochondrion where it phosphorylates pyruvate dehydrogenase kinase PDK1 to inhibit pyruvate dehydrogenase complex activity and suppress the formation of acetyl-coenzyme A from pyruvate, and consequently inhibit oxidative phosphorylation and promote glycolysis. May play a role in sperm motility. The sequence is that of Phosphoglycerate kinase 1 (PGK1) from Macaca fascicularis (Crab-eating macaque).